The primary structure comprises 500 residues: Probable cytosol aminopeptidase (500 aa).

Residues Lys-267 and Asp-272 each contribute to the Mn(2+) site. The active site involves Lys-279. Asp-290, Asp-349, and Glu-351 together coordinate Mn(2+). Residue Arg-353 is part of the active site.

Belongs to the peptidase M17 family. Mn(2+) serves as cofactor.

The protein localises to the cytoplasm. The enzyme catalyses Release of an N-terminal amino acid, Xaa-|-Yaa-, in which Xaa is preferably Leu, but may be other amino acids including Pro although not Arg or Lys, and Yaa may be Pro. Amino acid amides and methyl esters are also readily hydrolyzed, but rates on arylamides are exceedingly low.. It catalyses the reaction Release of an N-terminal amino acid, preferentially leucine, but not glutamic or aspartic acids.. In terms of biological role, presumably involved in the processing and regular turnover of intracellular proteins. Catalyzes the removal of unsubstituted N-terminal amino acids from various peptides. In Tolumonas auensis (strain DSM 9187 / NBRC 110442 / TA 4), this protein is Probable cytosol aminopeptidase.